A 196-amino-acid polypeptide reads, in one-letter code: Ribonuclease HII (196 aa).

In terms of domain architecture, RNase H type-2 spans 9–196; sequence SLIAGVDEVG…APVKRAIGLK (188 aa). Residues aspartate 15, glutamate 16, and aspartate 107 each contribute to the a divalent metal cation site.

It belongs to the RNase HII family. Mn(2+) serves as cofactor. It depends on Mg(2+) as a cofactor.

Its subcellular location is the cytoplasm. The catalysed reaction is Endonucleolytic cleavage to 5'-phosphomonoester.. In terms of biological role, endonuclease that specifically degrades the RNA of RNA-DNA hybrids. The polypeptide is Ribonuclease HII (Photorhabdus laumondii subsp. laumondii (strain DSM 15139 / CIP 105565 / TT01) (Photorhabdus luminescens subsp. laumondii)).